The chain runs to 313 residues: MTVPNDDTWGPATSVGTTATMAAAARAIATRDGVINDPFAEPLVRAVGVNFLTRWAIGELVASDVDVEGSPWGLAQMPAAIAARTRYFDEFYADAAAAGIRQAVILASGLDTRAYRLDWPAGMTVFEIDQPAVVEFKTTALARLAAEPKADLRTVAVDLRDDWSTALATAGLDSSKPTAWIAEGLFGYLAPEAQDRLLDAVTALSTPGSRLGSEAVPDTADMDPHAARQRMRAATAKWRDHGFELDVDVISFAGERHDVGAYLQALGWTTVATPMAELLADQGLPAIARADDDRQTMNGVTYYTSTLGTGRQR.

Residues Asp129 and 158 to 159 (DL) each bind S-adenosyl-L-methionine.

This sequence belongs to the UPF0677 family.

Functionally, exhibits S-adenosyl-L-methionine-dependent methyltransferase activity. This Mycobacterium avium (strain 104) protein is Putative S-adenosyl-L-methionine-dependent methyltransferase MAV_4573.